We begin with the raw amino-acid sequence, 140 residues long: PDZ domain-containing protein 11 (140 aa).

Residues 47–129 (IVTLKKPPGA…ISMRVRFFPY (83 aa)) enclose the PDZ domain.

Interacts with ATP2B1, ATP2B2, ATP2B3, ATP2B4 and ATP7A. Interacts with PLEKHA7 (via WW domains) at zonula adherens; this interaction is essential for the interaction between PLEKHA7 and the ADAM10-binding protein TSPAN33. Interacts with SLC5A6.

The protein localises to the cytoplasm. The protein resides in the cell junction. Its subcellular location is the adherens junction. It localises to the cell membrane. In terms of biological role, mediates docking of ADAM10 to zonula adherens by interacting with PLEKHA7 which is required for PLEKHA7 to interact with the ADAM10-binding protein TSPAN33. The protein is PDZ domain-containing protein 11 (PDZD11) of Bos taurus (Bovine).